Reading from the N-terminus, the 339-residue chain is GTPase Obg (339 aa).

The region spanning 1 to 159 (MKFVDEAFVR…RELKLELKLL (159 aa)) is the Obg domain. The tract at residues 127–147 (NTHFKSSTNRAPRRTTSGEEG) is disordered. The OBG-type G domain occupies 160 to 333 (ADVGLLGLPN…LCYDLMSFLE (174 aa)). Residues 166 to 173 (GLPNAGKS), 191 to 195 (FTTLY), 213 to 216 (DIPG), 283 to 286 (NKID), and 314 to 316 (SAI) contribute to the GTP site. 2 residues coordinate Mg(2+): serine 173 and threonine 193.

Belongs to the TRAFAC class OBG-HflX-like GTPase superfamily. OBG GTPase family. In terms of assembly, monomer. It depends on Mg(2+) as a cofactor.

It localises to the cytoplasm. Its function is as follows. An essential GTPase which binds GTP, GDP and possibly (p)ppGpp with moderate affinity, with high nucleotide exchange rates and a fairly low GTP hydrolysis rate. Plays a role in control of the cell cycle, stress response, ribosome biogenesis and in those bacteria that undergo differentiation, in morphogenesis control. This chain is GTPase Obg, found in Coxiella burnetii (strain CbuK_Q154) (Coxiella burnetii (strain Q154)).